The chain runs to 437 residues: Enolase (437 aa).

A (2R)-2-phosphoglycerate-binding site is contributed by glutamine 162. Glutamate 204 serves as the catalytic Proton donor. Residues aspartate 251, glutamate 297, and aspartate 324 each contribute to the Mg(2+) site. Residues lysine 349, arginine 378, serine 379, and lysine 400 each coordinate (2R)-2-phosphoglycerate. Lysine 349 (proton acceptor) is an active-site residue.

Belongs to the enolase family. Mg(2+) is required as a cofactor.

It is found in the cytoplasm. It localises to the secreted. Its subcellular location is the cell surface. The catalysed reaction is (2R)-2-phosphoglycerate = phosphoenolpyruvate + H2O. It functions in the pathway carbohydrate degradation; glycolysis; pyruvate from D-glyceraldehyde 3-phosphate: step 4/5. Catalyzes the reversible conversion of 2-phosphoglycerate (2-PG) into phosphoenolpyruvate (PEP). It is essential for the degradation of carbohydrates via glycolysis. The protein is Enolase of Pelodictyon phaeoclathratiforme (strain DSM 5477 / BU-1).